Here is a 945-residue protein sequence, read N- to C-terminus: Isoleucine--tRNA ligase (945 aa).

Residues 66–76 (PYANGDIHLGH) carry the 'HIGH' region motif. Residue Glu581 coordinates L-isoleucyl-5'-AMP. Positions 622 to 626 (KMSKS) match the 'KMSKS' region motif. Position 625 (Lys625) interacts with ATP. The Zn(2+) site is built by Cys908, Cys911, Cys928, and Cys931.

Belongs to the class-I aminoacyl-tRNA synthetase family. IleS type 1 subfamily. Monomer. Zn(2+) is required as a cofactor.

The protein resides in the cytoplasm. It carries out the reaction tRNA(Ile) + L-isoleucine + ATP = L-isoleucyl-tRNA(Ile) + AMP + diphosphate. Its function is as follows. Catalyzes the attachment of isoleucine to tRNA(Ile). As IleRS can inadvertently accommodate and process structurally similar amino acids such as valine, to avoid such errors it has two additional distinct tRNA(Ile)-dependent editing activities. One activity is designated as 'pretransfer' editing and involves the hydrolysis of activated Val-AMP. The other activity is designated 'posttransfer' editing and involves deacylation of mischarged Val-tRNA(Ile). In Paraburkholderia phytofirmans (strain DSM 17436 / LMG 22146 / PsJN) (Burkholderia phytofirmans), this protein is Isoleucine--tRNA ligase.